The chain runs to 212 residues: N-(5'-phosphoribosyl)anthranilate isomerase (212 aa).

It belongs to the TrpF family.

The catalysed reaction is N-(5-phospho-beta-D-ribosyl)anthranilate = 1-(2-carboxyphenylamino)-1-deoxy-D-ribulose 5-phosphate. Its pathway is amino-acid biosynthesis; L-tryptophan biosynthesis; L-tryptophan from chorismate: step 3/5. This is N-(5'-phosphoribosyl)anthranilate isomerase from Cereibacter sphaeroides (strain ATCC 17029 / ATH 2.4.9) (Rhodobacter sphaeroides).